Consider the following 341-residue polypeptide: L-threonine 3-dehydrogenase (341 aa).

A Zn(2+)-binding site is contributed by Cys38. Active-site charge relay system residues include Thr40 and His43. Zn(2+)-binding residues include His63, Glu64, Cys93, Cys96, Cys99, and Cys107. NAD(+)-binding positions include Ile175, Asp195, Arg200, 262–264 (LGI), and 286–287 (IY).

It belongs to the zinc-containing alcohol dehydrogenase family. Homotetramer. It depends on Zn(2+) as a cofactor.

The protein resides in the cytoplasm. It carries out the reaction L-threonine + NAD(+) = (2S)-2-amino-3-oxobutanoate + NADH + H(+). It functions in the pathway amino-acid degradation; L-threonine degradation via oxydo-reductase pathway; glycine from L-threonine: step 1/2. Catalyzes the NAD(+)-dependent oxidation of L-threonine to 2-amino-3-ketobutyrate. This chain is L-threonine 3-dehydrogenase, found in Chromobacterium violaceum (strain ATCC 12472 / DSM 30191 / JCM 1249 / CCUG 213 / NBRC 12614 / NCIMB 9131 / NCTC 9757 / MK).